A 92-amino-acid polypeptide reads, in one-letter code: RNA-binding protein Hfq (92 aa).

The 60-residue stretch at 9–68 (DPFLNALRRERVPVSIYLVNGIKLQGQVESFDQFVILLKNTVSQMVYKHAISTVVPARPF) folds into the Sm domain. The segment at 68-92 (FNVSSHHNTPNQAAGYNASHDDSAE) is disordered. Over residues 69-81 (NVSSHHNTPNQAA) the composition is skewed to polar residues.

The protein belongs to the Hfq family. As to quaternary structure, homohexamer.

Functionally, RNA chaperone that binds small regulatory RNA (sRNAs) and mRNAs to facilitate mRNA translational regulation in response to envelope stress, environmental stress and changes in metabolite concentrations. Also binds with high specificity to tRNAs. The protein is RNA-binding protein Hfq of Shewanella loihica (strain ATCC BAA-1088 / PV-4).